The sequence spans 314 residues: NF-kappa-B inhibitor alpha (314 aa).

Residues 1 to 41 (MFQPAEPGQEWAMEGPRDALKKERLLDDRHDSGLDSMKDEE) form a disordered region. Residues 15-41 (GPRDALKKERLLDDRHDSGLDSMKDEE) show a composition bias toward basic and acidic residues. Lys21 participates in a covalent cross-link: Glycyl lysine isopeptide (Lys-Gly) (interchain with G-Cter in SUMO); alternate. A Glycyl lysine isopeptide (Lys-Gly) (interchain with G-Cter in ubiquitin); alternate cross-link involves residue Lys21. A Glycyl lysine isopeptide (Lys-Gly) (interchain with G-Cter in ubiquitin) cross-link involves residue Lys22. Positions 30–36 (HDSGLDS) match the Destruction motif motif. Ser32 carries the post-translational modification Phosphoserine; by IKKA and IKKB. Ser36 carries the post-translational modification Phosphoserine; by IKKA, IKKB, IKKE and TBK1. Residue Tyr42 is modified to Phosphotyrosine; by Tyr-kinases. Residues 45 to 54 (MVKELREIRL) carry the Nuclear export signal motif. The Nuclear import signal motif lies at 110–120 (LQQTPLHLAVI). ANK repeat units lie at residues 110-139 (LQQTPLHLAVITNQPEIAEALLEAGCDPEL), 143-172 (RGNTPLHLACEQGCLASVGVLTQPRGTQHL), 182-211 (NGHTCLHLASIHGYLGIVELLVSLGADVNA), and 216-245 (NGRTALHLAVDLQNPDLVSLLLKCGADVNR). (3S)-3-hydroxyasparagine; by HIF1AN is present on residues Asn210 and Asn244. Phosphoserine; by CK2 occurs at positions 283 and 288. Residue Thr291 is modified to Phosphothreonine; by CK2. Phosphoserine; by CK2 is present on Ser293. Phosphothreonine is present on Thr296.

It belongs to the NF-kappa-B inhibitor family. As to quaternary structure, interacts with RELA; the interaction requires the nuclear import signal. Part of a 70-90 kDa complex at least consisting of CHUK, IKBKB, NFKBIA, RELA, ELP1 and MAP3K14. Interacts with NKIRAS1 and NKIRAS2. Interacts with RWDD3; the interaction enhances sumoylation. Interacts with PRMT2. Interacts with PRKACA in platelets; this interaction is disrupted by thrombin and collagen. Interacts with MEFV. Interacts with DDRGK1; positively regulates NFKBIA phosphorylation and degradation. Interacts with HNRNPA2B1; the interaction may be mediated by the RRM2 domain of HNRNPA2B1, and HNRNPA2B1 may interact simultaneously with FAM76B and either NFKBIA or NFKBIE to form a complex. In terms of processing, phosphorylated at Ser-32 and Ser-36 by IKKA/CHUK and IKKB/IKBKB; disables inhibition of NF-kappa-B DNA-binding activity. Phosphorylation at positions 32 and 36 is prerequisite to recognition by the SCF(FBXW11) and SCF(BTRC) complexes, leading to polyubiquitination and subsequent degradation. Polyubiquitinated at Lys-21 and/or Lys-22 following phosphorylation at Ser-32 and Ser-36. Monoubiquitinated at Lys-21 and/or Lys-22 by UBE2D3. Ubiquitin chain elongation is then performed by CDC34 in cooperation with the SCF(FBXW11) E3 ligase complex, building ubiquitin chains from the UBE2D3-primed NFKBIA-linked ubiquitin. The resulting polyubiquitination leads to protein degradation. Also ubiquitinated by the SCF(BTRC) complex following stimulus-dependent phosphorylation at Ser-32 and Ser-36. Deubiquitinated by USP38, leading to NF-kappa-B inhibition. Post-translationally, sumoylated; sumoylation requires the presence of the nuclear import signal. Sumoylation blocks ubiquitination and proteasome-mediated degradation of the protein thereby increasing the protein stability. In terms of processing, hydroxylated by HIF1AN.

Its subcellular location is the cytoplasm. The protein resides in the nucleus. Functionally, inhibits the activity of dimeric NF-kappa-B/REL complexes by trapping REL (RELA/p65 and NFKB1/p50) dimers in the cytoplasm by masking their nuclear localization signals. On cellular stimulation by immune and pro-inflammatory responses, becomes phosphorylated promoting ubiquitination and degradation, enabling the dimeric RELA to translocate to the nucleus and activate transcription. The protein is NF-kappa-B inhibitor alpha (NFKBIA) of Sus scrofa (Pig).